A 76-amino-acid chain; its full sequence is Adipogenesis regulatory factor (76 aa).

As to expression, expressed in adipose tissue (at protein level). Highly expressed in omental and subcutaneous adipose tissues. Expressed in heart, cornea, liver, kidney and spleen.

It is found in the nucleus. Plays a role in fat cell development; promotes adipogenic differentiation and stimulates transcription initiation of master adipogenesis factors like PPARG and CEBPA at early stages of preadipocyte differentiation. Its overexpression confers resistance to the anticancer chemotherapeutic drug cisplatin. This is Adipogenesis regulatory factor (ADIRF) from Homo sapiens (Human).